The sequence spans 350 residues: Histidinol-phosphate aminotransferase (350 aa).

Lysine 212 carries the post-translational modification N6-(pyridoxal phosphate)lysine.

It belongs to the class-II pyridoxal-phosphate-dependent aminotransferase family. Histidinol-phosphate aminotransferase subfamily. As to quaternary structure, homodimer. Pyridoxal 5'-phosphate is required as a cofactor.

It carries out the reaction L-histidinol phosphate + 2-oxoglutarate = 3-(imidazol-4-yl)-2-oxopropyl phosphate + L-glutamate. The protein operates within amino-acid biosynthesis; L-histidine biosynthesis; L-histidine from 5-phospho-alpha-D-ribose 1-diphosphate: step 7/9. The polypeptide is Histidinol-phosphate aminotransferase (Geobacter sulfurreducens (strain ATCC 51573 / DSM 12127 / PCA)).